The primary structure comprises 688 residues: Elongation factor G (688 aa).

The region spanning 8–282 (DKFRNFGIMA…GVVDYLPSPL (275 aa)) is the tr-type G domain. Residues 17-24 (AHIDAGKT), 81-85 (DTPGH), and 135-138 (NKMD) each bind GTP.

This sequence belongs to the TRAFAC class translation factor GTPase superfamily. Classic translation factor GTPase family. EF-G/EF-2 subfamily.

Its subcellular location is the cytoplasm. Functionally, catalyzes the GTP-dependent ribosomal translocation step during translation elongation. During this step, the ribosome changes from the pre-translocational (PRE) to the post-translocational (POST) state as the newly formed A-site-bound peptidyl-tRNA and P-site-bound deacylated tRNA move to the P and E sites, respectively. Catalyzes the coordinated movement of the two tRNA molecules, the mRNA and conformational changes in the ribosome. The sequence is that of Elongation factor G from Clostridium botulinum (strain Alaska E43 / Type E3).